Consider the following 232-residue polypeptide: Glutathione S-transferase E14 (232 aa).

The GST N-terminal domain occupies 4–85; that stretch reads PKPILYYDER…HLAEKFDEGG (82 aa). The GST C-terminal domain maps to 91–218; the sequence is EHAERMKVLN…RQTMESVGSF (128 aa).

It belongs to the GST superfamily. Epsilon family. As to expression, expressed in the adult ovary (at protein level).

It catalyses the reaction RX + glutathione = an S-substituted glutathione + a halide anion + H(+). Conjugation of reduced glutathione to a wide number of exogenous and endogenous hydrophobic electrophiles. Essential for ecdysteroid biosynthesis. May be involved in detoxification. This is Glutathione S-transferase E14 from Drosophila melanogaster (Fruit fly).